Consider the following 78-residue polypeptide: MRPIIEFCLSNLASGTQKAMEELEKDPNLDIIEYGCLSHCGSCANDKFALVNGEYVSGETNEQLVENIYHYLDENPMF.

It belongs to the UPF0349 family.

This is UPF0349 protein BH3414 from Halalkalibacterium halodurans (strain ATCC BAA-125 / DSM 18197 / FERM 7344 / JCM 9153 / C-125) (Bacillus halodurans).